A 420-amino-acid chain; its full sequence is MGLVQEEGSGPVHGFRLSTVSASLPSETGTTHEPTGLDLAMKLHYLKAVYIYSAGTARDLTVMDVKAPLFSVFYQIPCIIGRFRRHESGRPYLKCNDCGTRFVESHCDLTVEEWLRVPDRSVDESLVYHQPVGPDLAFSPLLYIQMTRFSCGGLALGLSWAHIMGDPFSLSHFFNLWAQAFAGGKIYCPKTSVTERDFQNPTSTFKKPDSVKQVDLVGDLWVAPNNSKMTTFSFNLTVNDLKTHFPVNGDGEFEILTGIIWKCVATVRGESAPVTITVIRSDPKKLKPRAVRNGQMISSIHVDFSVAEASLEEIVKSIGEAKDERVVIDEIVDDVSDFIVYGANLTFVDMSEVDFYEAKVMGKSPESVYCNVQGIGDDGAVVVLPGVVEEERVVTVTLPVDEIEKVKWEMKKCGLITPLV.

Belongs to the plant acyltransferase family. In terms of tissue distribution, highly expressed in flowers. Expressed in leaves.

Functionally, involved in biosynthesis of the epicuticular wax. Plays a role in very-long-chain fatty acid (VLCFA) biosynthesis and is required for VLCFA elongation in leaf. Despite its classification as a BAHD acyltransferase based on sequence homology, CER26L does not seem to share the catalytic mechanism of the members of the BAHD family. This is Protein ECERIFERUM 26-like (CER26L) from Arabidopsis thaliana (Mouse-ear cress).